A 134-amino-acid polypeptide reads, in one-letter code: Small ribosomal subunit protein uS11 (134 aa).

The protein belongs to the universal ribosomal protein uS11 family. As to quaternary structure, part of the 30S ribosomal subunit. Interacts with proteins S7 and S18. Binds to IF-3.

Located on the platform of the 30S subunit, it bridges several disparate RNA helices of the 16S rRNA. Forms part of the Shine-Dalgarno cleft in the 70S ribosome. The sequence is that of Small ribosomal subunit protein uS11 from Janthinobacterium sp. (strain Marseille) (Minibacterium massiliensis).